A 234-amino-acid chain; its full sequence is R-spondin-4 (234 aa).

Positions 1-19 (MRAPLCLLLLVAHAVDMLA) are cleaved as a signal peptide. Asn34 is a glycosylation site (N-linked (GlcNAc...) asparagine). 11 cysteine pairs are disulfide-bonded: Cys35-Cys41, Cys38-Cys47, Cys50-Cys69, Cys73-Cys88, Cys91-Cys98, Cys95-Cys104, Cys107-Cys118, Cys122-Cys135, Cys139-Cys181, Cys150-Cys157, and Cys190-Cys196. One copy of the FU repeat lies at 85–128 (VNRCKKCGATCESCFSQDFCIRCKRQFYLYKGKCLPTCPPGTLA). The 60-residue stretch at 138–197 (ECELGPWGGWSPCTHNGKTCGSAWGLESRVREAGRAGHEEAATCQVLSESRKCPIQRPCP) folds into the TSP type-1 domain. The segment at 190-234 (CPIQRPCPGERSPGQKKGRKDRRPRKDRKLDRRLDVRPRQPGLQP) is disordered. Basic residues predominate over residues 203-216 (GQKKGRKDRRPRKD). Residues 217–227 (RKLDRRLDVRP) are compositionally biased toward basic and acidic residues.

It belongs to the R-spondin family. Binds heparin. Interacts with LGR4, LGR5 and LGR6. In terms of processing, tyr-112 may be phosphorylated; however as this position is probably extracellular, the vivo relevance is not proven.

The protein resides in the secreted. Activator of the canonical Wnt signaling pathway by acting as a ligand for LGR4-6 receptors. Upon binding to LGR4-6 (LGR4, LGR5 or LGR6), LGR4-6 associate with phosphorylated LRP6 and frizzled receptors that are activated by extracellular Wnt receptors, triggering the canonical Wnt signaling pathway to increase expression of target genes. Also regulates the canonical Wnt/beta-catenin-dependent pathway and non-canonical Wnt signaling by acting as an inhibitor of ZNRF3, an important regulator of the Wnt signaling pathway. The protein is R-spondin-4 (RSPO4) of Homo sapiens (Human).